A 102-amino-acid polypeptide reads, in one-letter code: Small ribosomal subunit protein uS10 (102 aa).

The protein belongs to the universal ribosomal protein uS10 family. Part of the 30S ribosomal subunit.

Functionally, involved in the binding of tRNA to the ribosomes. This Leifsonia xyli subsp. xyli (strain CTCB07) protein is Small ribosomal subunit protein uS10.